The following is a 448-amino-acid chain: Protein kinase C and casein kinase substrate in neurons protein 2 (448 aa).

In terms of domain architecture, F-BAR spans Val11 to Asp282. The stretch at Lys25–Ile274 forms a coiled coil. Residues Ser315–Ser386 form a disordered region. Over residues Thr329–Thr358 the composition is skewed to polar residues. The NPF1 motif lies at Asn367–Phe369. Positions Asn379–Phe381 match the NPF2 motif. Residues Val388–Gln448 enclose the SH3 domain.

This sequence belongs to the PACSIN family. In terms of processing, phosphorylated on serine residues. In terms of tissue distribution, detected in intestine, cardiac muscle, lung and brain (at protein level). Expressed in all tissues tested, including, gizzard, liver, cardiac muscle, skeletal muscle and skin.

Its subcellular location is the cytoplasm. It localises to the cytoskeleton. The protein localises to the cytoplasmic vesicle membrane. It is found in the cell projection. The protein resides in the ruffle membrane. Its subcellular location is the early endosome. It localises to the recycling endosome membrane. The protein localises to the cell membrane. It is found in the membrane. The protein resides in the caveola. Its subcellular location is the cell junction. It localises to the focal adhesion. Its function is as follows. Regulates the morphogenesis and endocytosis of caveolae. Lipid-binding protein that is able to promote the tubulation of the phosphatidic acid-containing membranes it preferentially binds. Plays a role in intracellular vesicle-mediated transport. Involved in the endocytosis of cell-surface receptors like the EGF receptor, contributing to its internalization in the absence of EGF stimulus. Essential for endothelial organization in sprouting angiogenesis, modulates CDH5-based junctions. Facilitates endothelial front-rear polarity during migration by recruiting EHD4 and MICALL1 to asymmetric adherens junctions between leader and follower cells. The sequence is that of Protein kinase C and casein kinase substrate in neurons protein 2 (PACSIN2) from Gallus gallus (Chicken).